Consider the following 66-residue polypeptide: Phylloseptin-S6 (66 aa).

Positions 1–22 (MAFLKKSLFLVLFLGLVSLSIC) are cleaved as a signal peptide. A propeptide spanning residues 23–46 (EEEKRETEEEEHDQEEDDKSEEKR) is cleaved from the precursor. The interval 25–44 (EKRETEEEEHDQEEDDKSEE) is disordered. Acidic residues predominate over residues 30–41 (EEEEHDQEEDDK). L65 carries the post-translational modification Leucine amide.

Belongs to the frog skin active peptide (FSAP) family. Phylloseptin subfamily. Expressed by the skin glands.

It is found in the secreted. It localises to the target cell membrane. Its function is as follows. Antimicrobial peptide with high activity against Gram-positive bacteria, low activity against Gram-negative bacteria, and moderate activity against fungi. Acts by causing bacterial membrane disruption inducing leakage of the intracellular content followed by cell death. It adopts an alpha-helical amphipathic structure in membrane environments. Also shows highly potent antiparasitic activity against Leishmania species. Shows moderate hemolytic activity on human erythrocytes. Is also active on human monocytes. In Phyllomedusa sauvagei (Sauvage's leaf frog), this protein is Phylloseptin-S6.